The primary structure comprises 310 residues: Methionyl-tRNA formyltransferase (310 aa).

109–112 (SLLP) contributes to the (6S)-5,6,7,8-tetrahydrofolate binding site.

It belongs to the Fmt family.

The catalysed reaction is L-methionyl-tRNA(fMet) + (6R)-10-formyltetrahydrofolate = N-formyl-L-methionyl-tRNA(fMet) + (6S)-5,6,7,8-tetrahydrofolate + H(+). Its function is as follows. Attaches a formyl group to the free amino group of methionyl-tRNA(fMet). The formyl group appears to play a dual role in the initiator identity of N-formylmethionyl-tRNA by promoting its recognition by IF2 and preventing the misappropriation of this tRNA by the elongation apparatus. The chain is Methionyl-tRNA formyltransferase from Pseudomonas putida (strain ATCC 700007 / DSM 6899 / JCM 31910 / BCRC 17059 / LMG 24140 / F1).